Consider the following 444-residue polypeptide: Pineal opsin (444 aa).

The interval M1 to S20 is disordered. Residues M1–N46 lie on the Extracellular side of the membrane. Residues S7–S20 show a composition bias toward low complexity. N25 carries N-linked (GlcNAc...) asparagine glycosylation. The helical transmembrane segment at F47 to V71 threads the bilayer. Residues T72–N83 are Cytoplasmic-facing. Residues Y84–N108 form a helical membrane-spanning segment. Over I109–E123 the chain is Extracellular. C120 and C197 form a disulfide bridge. Residues G124–F143 form a helical membrane-spanning segment. Residues E144–H162 are Cytoplasmic-facing. Residues A163–S186 traverse the membrane as a helical segment. Over S187–T210 the chain is Extracellular. A helical transmembrane segment spans residues F211–L238. Residues K239–R260 lie on the Cytoplasmic side of the membrane. Residues M261–T284 form a helical membrane-spanning segment. At A285–D292 the chain is on the extracellular side. A helical transmembrane segment spans residues P293–M317. Position 304 is an N6-(retinylidene)lysine (K304). At N318 to V444 the chain is on the cytoplasmic side. A lipid anchor (S-palmitoyl cysteine) is attached at C331. Disordered stretches follow at residues Q341–G360 and E388–T420. The segment covering Q409–G419 has biased composition (low complexity).

It belongs to the G-protein coupled receptor 1 family. Opsin subfamily. Post-translationally, phosphorylated on some or all of the serine and threonine residues present in the C-terminal region. In terms of tissue distribution, pineal gland.

Its subcellular location is the membrane. This is Pineal opsin from Petromyzon marinus (Sea lamprey).